The sequence spans 401 residues: NAD(P)H-quinone oxidoreductase subunit H, chloroplastic (401 aa).

Belongs to the complex I 49 kDa subunit family. NDH is composed of at least 16 different subunits, 5 of which are encoded in the nucleus.

The protein resides in the plastid. Its subcellular location is the chloroplast thylakoid membrane. The catalysed reaction is a plastoquinone + NADH + (n+1) H(+)(in) = a plastoquinol + NAD(+) + n H(+)(out). It catalyses the reaction a plastoquinone + NADPH + (n+1) H(+)(in) = a plastoquinol + NADP(+) + n H(+)(out). In terms of biological role, NDH shuttles electrons from NAD(P)H:plastoquinone, via FMN and iron-sulfur (Fe-S) centers, to quinones in the photosynthetic chain and possibly in a chloroplast respiratory chain. The immediate electron acceptor for the enzyme in this species is believed to be plastoquinone. Couples the redox reaction to proton translocation, and thus conserves the redox energy in a proton gradient. The polypeptide is NAD(P)H-quinone oxidoreductase subunit H, chloroplastic (Aethionema cordifolium (Lebanon stonecress)).